A 190-amino-acid chain; its full sequence is Potassium-transporting ATPase KdpC subunit (190 aa).

A helical membrane pass occupies residues 13–33 (VGFLLLTLVCGVIYPGVVTII).

This sequence belongs to the KdpC family. As to quaternary structure, the system is composed of three essential subunits: KdpA, KdpB and KdpC.

The protein localises to the cell membrane. Part of the high-affinity ATP-driven potassium transport (or Kdp) system, which catalyzes the hydrolysis of ATP coupled with the electrogenic transport of potassium into the cytoplasm. This subunit acts as a catalytic chaperone that increases the ATP-binding affinity of the ATP-hydrolyzing subunit KdpB by the formation of a transient KdpB/KdpC/ATP ternary complex. The sequence is that of Potassium-transporting ATPase KdpC subunit from Listeria innocua serovar 6a (strain ATCC BAA-680 / CLIP 11262).